Reading from the N-terminus, the 217-residue chain is NAD(P)H-hydrate epimerase (217 aa).

Residues 1–217 (MRAIENAAMA…VAVADIGLSS (217 aa)) form the YjeF N-terminal domain. 48–52 (NNGGD) contacts (6S)-NADPHX. N49 and D127 together coordinate K(+). (6S)-NADPHX is bound by residues 131–137 (GIGQTRP) and D165. T168 serves as a coordination point for K(+).

This sequence belongs to the NnrE/AIBP family. K(+) is required as a cofactor.

It carries out the reaction (6R)-NADHX = (6S)-NADHX. It catalyses the reaction (6R)-NADPHX = (6S)-NADPHX. Its function is as follows. Catalyzes the epimerization of the S- and R-forms of NAD(P)HX, a damaged form of NAD(P)H that is a result of enzymatic or heat-dependent hydration. This is a prerequisite for the S-specific NAD(P)H-hydrate dehydratase to allow the repair of both epimers of NAD(P)HX. This chain is NAD(P)H-hydrate epimerase, found in Cereibacter sphaeroides (strain KD131 / KCTC 12085) (Rhodobacter sphaeroides).